A 243-amino-acid polypeptide reads, in one-letter code: Calcium-binding protein LPS1-beta (243 aa).

EF-hand domains are found at residues 15–49 (EVID…DCPE), 47–82 (CPEE…YTKE), 85–120 (YSSD…ISTK), 121–156 (LVEG…KLPL), 157–189 (CFKK…NLPG), 191–226 (YSEE…LSKD), and 227–243 (DIKN…NGKI). Ca(2+)-binding residues include Asp-29, Asn-31, Asp-33, Thr-35, Glu-40, Asp-60, Asn-62, Asp-64, Arg-66, Glu-71, Asp-98, Asp-100, Asn-102, Arg-104, Glu-109, Asp-134, Asp-136, Asp-138, His-140, Glu-145, Asp-167, Asn-169, Asp-171, Ser-173, Glu-178, Asp-204, Asn-206, Asp-208, Arg-210, and Glu-215.

As to expression, aboral ectoderm, a squamous epithelium covering the surface of the late stage embryo and larva.

Its function is as follows. Calcium-binding protein involved in larval development and metamorphosis. Likely to function as calcium buffers mediating the transport of calcium from the sea water to the blastocoel where calcium is required for skeleton formation. The sequence is that of Calcium-binding protein LPS1-beta from Lytechinus pictus (Painted sea urchin).